We begin with the raw amino-acid sequence, 679 residues long: MIHREKYHHLRIRLASPEQIRSWAERVLPNGEIVGQVTKPYTLHYKTHKPEKDGLFCERIFGPIKSGICACGKYQIIEKYSKFCEQCGVEFVESRVRRYRMGYIKLACPVTHVWYLKRLPSYIANLLAKPLKELESLVYCDLFLARPISKKPILLKLRGLFKYEDQSWREIFPRYFSSRGFEAFQNKEIATGGDAIKKQLSNLDLQGVLDYAYIEWKELVEQKSTGNEWEDRKIQRRKDLLVRRIKLAKQFLQTNIKPEWMVLSLLPVLPPELRPMIELGEGELITSDLNELYRRVIYRNNTLIDFLARSGSTPGGLVVCQIRLVQEAVDGLIDNGIRGQPMKDSHNRPYKSFSDVIEGKEGRFRENLLGKRVDYSGRSVIVVGPFLSLHQCGLPREMAIELFQAFVIRGLIGRHLAPNLRAAKSMIQNKEPIIWKILQEIMQGHPVLLNRAPTLHRLGIQAFQPILIKGRAIRLHPLVCGGFNADFDGDQMAVHIPLSLEAQAEARLLMFSHTNLLSPATGDPVSVPSQDMLLGLYILTIKNHQGIYGNKNHPYKQNNNKIFLNKTPYFSSYDDVIKAYNQKKVRLHSALWLWWGSKLRTITSINREKPIEVQYNSSGISFKIYEHYQLKKNKNEKNFSVYICTTVGRIIFNQQIEEAIQGTLKASLFRNQSLPAITI.

Zn(2+)-binding residues include cysteine 69, cysteine 71, cysteine 84, and cysteine 87. Aspartate 486, aspartate 488, and aspartate 490 together coordinate Mg(2+).

The protein belongs to the RNA polymerase beta' chain family. RpoC1 subfamily. In plastids the minimal PEP RNA polymerase catalytic core is composed of four subunits: alpha, beta, beta', and beta''. When a (nuclear-encoded) sigma factor is associated with the core the holoenzyme is formed, which can initiate transcription. Requires Mg(2+) as cofactor. Zn(2+) serves as cofactor.

Its subcellular location is the plastid. It localises to the chloroplast. The enzyme catalyses RNA(n) + a ribonucleoside 5'-triphosphate = RNA(n+1) + diphosphate. DNA-dependent RNA polymerase catalyzes the transcription of DNA into RNA using the four ribonucleoside triphosphates as substrates. In Physcomitrium patens (Spreading-leaved earth moss), this protein is DNA-directed RNA polymerase subunit beta'.